Here is a 468-residue protein sequence, read N- to C-terminus: Argininosuccinate lyase (468 aa).

Positions 33, 121, and 166 each coordinate 2-(N(omega)-L-arginino)succinate. The Proton acceptor role is filled by His-167. Ser-288 acts as the Proton donor in catalysis. Positions 296, 328, 333, and 336 each coordinate 2-(N(omega)-L-arginino)succinate.

The protein belongs to the lyase 1 family. Argininosuccinate lyase subfamily. Homotetramer.

The enzyme catalyses 2-(N(omega)-L-arginino)succinate = fumarate + L-arginine. Its pathway is amino-acid biosynthesis; L-arginine biosynthesis; L-arginine from L-ornithine and carbamoyl phosphate: step 3/3. This chain is Argininosuccinate lyase (ARG4), found in Candida albicans (Yeast).